We begin with the raw amino-acid sequence, 153 residues long: Transcription antitermination protein NusB (153 aa).

It belongs to the NusB family.

Involved in transcription antitermination. Required for transcription of ribosomal RNA (rRNA) genes. Binds specifically to the boxA antiterminator sequence of the ribosomal RNA (rrn) operons. This Fusobacterium nucleatum subsp. nucleatum (strain ATCC 25586 / DSM 15643 / BCRC 10681 / CIP 101130 / JCM 8532 / KCTC 2640 / LMG 13131 / VPI 4355) protein is Transcription antitermination protein NusB.